The sequence spans 214 residues: Small ribosomal subunit protein uS3 (214 aa).

Residues 39–107 enclose the KH type-2 domain; sequence IRAYLLKKPA…EVWVAVEEVK (69 aa).

This sequence belongs to the universal ribosomal protein uS3 family. As to quaternary structure, part of the 30S ribosomal subunit. Forms a tight complex with proteins S10 and S14.

Its function is as follows. Binds the lower part of the 30S subunit head. Binds mRNA in the 70S ribosome, positioning it for translation. The chain is Small ribosomal subunit protein uS3 from Protochlamydia amoebophila (strain UWE25).